The chain runs to 308 residues: Olfactory receptor 2T6 (308 aa).

Residues 1-28 are Extracellular-facing; the sequence is MNENNETLTRGFTLMGLFTHNKCSGFFF. Asparagine 5 is a glycosylation site (N-linked (GlcNAc...) asparagine). The chain crosses the membrane as a helical span at residues 29–49; it reads GVICAVFFMAMIANGVMIFLI. The Cytoplasmic segment spans residues 50–57; it reads NIDPHLHT. Residues 58–78 traverse the membrane as a helical segment; the sequence is PMYFLLSHLSVIDTLYISTIV. Over 79 to 98 the chain is Extracellular; the sequence is PKMLVDYLMGEGTISFIACT. Cysteines 97 and 179 form a disulfide. A helical transmembrane segment spans residues 99-119; it reads AQCFLYMGFMGAEFFLLGLMA. Topologically, residues 120-145 are cytoplasmic; sequence YDRYVAICNPLRYPVLISWRVCWMIL. The helical transmembrane segment at 146–166 threads the bilayer; sequence ASSWFGGALDSFLLTPITMSL. Over 167–203 the chain is Extracellular; sequence PFCASHQINHFFCEAPTMLRLACGDKTTYETVMYVCC. Residues 204–224 form a helical membrane-spanning segment; sequence VAMLLIPFSVVTASYTRILIT. The Cytoplasmic portion of the chain corresponds to 225 to 236; it reads VHQMTSAEGRKK. A helical transmembrane segment spans residues 237–257; the sequence is AFATCSSHMMVVTLFYGAALY. At 258–271 the chain is on the extracellular side; sequence TYTLPQSYHTPIKD. The chain crosses the membrane as a helical span at residues 272 to 292; that stretch reads KVFSAFYTILTPLLNPLIYSL. The Cytoplasmic segment spans residues 293 to 308; that stretch reads RNRDVMGALKRVVARC.

It belongs to the G-protein coupled receptor 1 family.

It is found in the cell membrane. Its function is as follows. Odorant receptor. This chain is Olfactory receptor 2T6 (OR2T6), found in Homo sapiens (Human).